Reading from the N-terminus, the 127-residue chain is Large ribosomal subunit protein uL22c (127 aa).

It belongs to the universal ribosomal protein uL22 family. As to quaternary structure, part of the 50S ribosomal subunit.

It is found in the plastid. It localises to the chloroplast. This protein binds specifically to 23S rRNA. Its function is as follows. The globular domain of the protein is located near the polypeptide exit tunnel on the outside of the subunit, while an extended beta-hairpin is found that lines the wall of the exit tunnel in the center of the 70S ribosome. The protein is Large ribosomal subunit protein uL22c (rpl22) of Acorus calamus var. americanus (American sweet flag).